A 406-amino-acid chain; its full sequence is O-succinylhomoserine sulfhydrylase (406 aa).

At Lys-219 the chain carries N6-(pyridoxal phosphate)lysine.

It belongs to the trans-sulfuration enzymes family. MetZ subfamily. Homotetramer. Pyridoxal 5'-phosphate is required as a cofactor.

The catalysed reaction is O-succinyl-L-homoserine + hydrogen sulfide = L-homocysteine + succinate. Its pathway is amino-acid biosynthesis; L-methionine biosynthesis via de novo pathway; L-homocysteine from O-succinyl-L-homoserine: step 1/1. Functionally, catalyzes the formation of L-homocysteine from O-succinyl-L-homoserine (OSHS) and hydrogen sulfide. The polypeptide is O-succinylhomoserine sulfhydrylase (Mycobacterium tuberculosis (strain CDC 1551 / Oshkosh)).